A 197-amino-acid polypeptide reads, in one-letter code: Protein RmlC homolog (197 aa).

His-76 (proton acceptor) is an active-site residue. Tyr-140 serves as the catalytic Proton donor.

Its function is as follows. Could catalyze a 3,5-epimerization. This is Protein RmlC homolog (rfbC) from Streptococcus pyogenes serotype M6 (strain ATCC BAA-946 / MGAS10394).